The following is a 266-amino-acid chain: MDTFQVIILALIQGLTEFLPISSSAHLILPAQLLGWEDQGLSFDVAVNTGSLFAVVIYFRNELWAMFKAWIASMVKGQHSDDSKLAWWIILATLPAVFFGFIAKDFIETHLRSAGVIAVTTIVFGLLLWWADKMSRRDLTVYQTGWRKALLIGFAQALALIPGTSRSGATMTAALMLGLSRDAAARFSFLMSVPVSLGAAILVGKDLAESPLPIDYQALTLGTVISFVAAYLCIHYFLKIISRMGMTPFVIYRLILGAVLCGFIFL.

8 helical membrane passes run Met1–Ile21, Gln39–Phe59, Trp87–Ile107, Leu111–Ala131, Ala149–Ala169, Ala183–Val203, Ala218–Leu238, and Met246–Leu266.

The protein belongs to the UppP family.

The protein resides in the cell inner membrane. It carries out the reaction di-trans,octa-cis-undecaprenyl diphosphate + H2O = di-trans,octa-cis-undecaprenyl phosphate + phosphate + H(+). Catalyzes the dephosphorylation of undecaprenyl diphosphate (UPP). Confers resistance to bacitracin. The polypeptide is Undecaprenyl-diphosphatase (Shewanella sp. (strain MR-7)).